The chain runs to 336 residues: UbiA prenyltransferase domain-containing protein 1 (336 aa).

Alanine 2 carries the N-acetylalanine modification. Helical transmembrane passes span 81–101 (LLLG…LVNT), 132–152 (FGVF…YLSA), 158–178 (LALI…GIGF), 186–206 (LVIL…VQVG), 207–227 (SLAI…EAIL), 243–265 (IVTL…LLFV), 275–295 (THCS…FSLE), and 313–333 (LNLL…AGSL).

Belongs to the UbiA prenyltransferase family. Interacts with HMGCR and SOAT1.

It is found in the endoplasmic reticulum membrane. Its subcellular location is the golgi apparatus membrane. It localises to the mitochondrion membrane. The catalysed reaction is menadiol + (2E,6E,10E)-geranylgeranyl diphosphate = menaquinol-4 + diphosphate. It carries out the reaction all-trans-decaprenyl diphosphate + 4-hydroxybenzoate = 4-hydroxy-3-(all-trans-decaprenyl)benzoate + diphosphate. Its pathway is quinol/quinone metabolism; menaquinone biosynthesis. The protein operates within cofactor biosynthesis; ubiquinone biosynthesis. Prenyltransferase that mediates the formation of menaquinone-4 (MK-4) and coenzyme Q10. MK-4 is a vitamin K2 isoform required for endothelial cell development. Mediates the conversion of phylloquinone (PK) into MK-4, probably by cleaving the side chain of phylloquinone (PK) to release 2-methyl-1,4-naphthoquinone (menadione; K3) and then prenylating it with geranylgeranyl pyrophosphate (GGPP) to form MK-4. Also plays a role in cardiovascular development independently of MK-4 biosynthesis, by acting as a coenzyme Q10 biosynthetic enzyme: coenzyme Q10, also named ubiquinone, plays an important antioxidant role in the cardiovascular system. Mediates biosynthesis of coenzyme Q10 in the Golgi membrane, leading to protect cardiovascular tissues from NOS3/eNOS-dependent oxidative stress. The protein is UbiA prenyltransferase domain-containing protein 1 (Ubiad1) of Mus musculus (Mouse).